We begin with the raw amino-acid sequence, 460 residues long: Chromosomal replication initiator protein DnaA (460 aa).

The tract at residues 1–91 (MSLINPKVSA…LLWQNEDKSI (91 aa)) is domain I, interacts with DnaA modulators. The segment at 91-122 (ICSIDIQVTEEKNSSSSIISKNKEESVNNLGS) is domain II. The domain III, AAA+ region stretch occupies residues 123-342 (PLDPRFTFDN…GALNKVAHTS (220 aa)). Residues Gly169, Gly171, Lys172, and Thr173 each coordinate ATP. The tract at residues 343–460 (LIGRSMTVES…EINQLRKMFK (118 aa)) is domain IV, binds dsDNA.

Belongs to the DnaA family. In terms of assembly, oligomerizes as a right-handed, spiral filament on DNA at oriC.

Its subcellular location is the cytoplasm. Plays an essential role in the initiation and regulation of chromosomal replication. ATP-DnaA binds to the origin of replication (oriC) to initiate formation of the DNA replication initiation complex once per cell cycle. Binds the DnaA box (a 9 base pair repeat at the origin) and separates the double-stranded (ds)DNA. Forms a right-handed helical filament on oriC DNA; dsDNA binds to the exterior of the filament while single-stranded (ss)DNA is stabiized in the filament's interior. The ATP-DnaA-oriC complex binds and stabilizes one strand of the AT-rich DNA unwinding element (DUE), permitting loading of DNA polymerase. After initiation quickly degrades to an ADP-DnaA complex that is not apt for DNA replication. Binds acidic phospholipids. This chain is Chromosomal replication initiator protein DnaA, found in Wolbachia sp. subsp. Brugia malayi (strain TRS).